Reading from the N-terminus, the 244-residue chain is Nonsense-mediated decay protein 4 (244 aa).

The protein resides in the cytoplasm. Functionally, involved in nonsense-mediated decay of mRNAs containing premature stop codons. The sequence is that of Nonsense-mediated decay protein 4 (NMD4) from Kluyveromyces lactis (strain ATCC 8585 / CBS 2359 / DSM 70799 / NBRC 1267 / NRRL Y-1140 / WM37) (Yeast).